Here is a 101-residue protein sequence, read N- to C-terminus: UPF0473 protein SUB1774 (101 aa).

This sequence belongs to the UPF0473 family.

This chain is UPF0473 protein SUB1774, found in Streptococcus uberis (strain ATCC BAA-854 / 0140J).